Consider the following 570-residue polypeptide: Molecular chaperone MKKS (570 aa).

192 to 199 provides a ligand contact to ATP; the sequence is ERMVLGKS. A substrate-binding apical domain region spans residues 198-370; sequence KSIIVPLKGQ…FHLLPNEATV (173 aa).

The protein belongs to the TCP-1 chaperonin family. In terms of assembly, component of a complex composed at least of MKKS, BBS10, BBS12, TCP1, CCT2, CCT3, CCT4, CCT5 and CCT8. Interacts with STUB1. Interacts with BBS2 (via coiled coil domain). Interacts with CCDC28B. Interacts with BBS12. Interacts with SMARCC1, a component of the SWI/SNF complexes; the interaction takes place predominantly in the cytoplasm and may modulate SMARCC1 location. Interacts with DLEC1. As to expression, widely expressed in adult and fetal tissues. Expressed in the developing heart, brain retina, limb buds, as well as in the developing neural tube. Expressed in the embryo in the first and second branchial arches. Expressed in parafin embedded tissue sections of brain, kidney, retina, olfactory epithelium and the ependymal layer of ventricles. Detected only in restricted regions of these tissue sections, including the ciliated border of renal tubules, the connecting cilium and the inner and outer nuclear layers of retina, and the ciliated layer of olfactory epithelia.

The protein localises to the cytoplasm. Its subcellular location is the cytoskeleton. It is found in the microtubule organizing center. The protein resides in the centrosome. It localises to the cytosol. The protein localises to the nucleus. Functionally, probable molecular chaperone that assists the folding of proteins upon ATP hydrolysis. Plays a role in the assembly of BBSome, a complex involved in ciliogenesis regulating transports vesicles to the cilia. May play a role in protein processing in limb, cardiac and reproductive system development. May play a role in cytokinesis. This chain is Molecular chaperone MKKS (Mkks), found in Mus musculus (Mouse).